The sequence spans 492 residues: N-succinylglutamate 5-semialdehyde dehydrogenase (492 aa).

An NAD(+)-binding site is contributed by 220 to 225; it reads GSANTG. Active-site residues include glutamate 243 and cysteine 277.

It belongs to the aldehyde dehydrogenase family. AstD subfamily.

It carries out the reaction N-succinyl-L-glutamate 5-semialdehyde + NAD(+) + H2O = N-succinyl-L-glutamate + NADH + 2 H(+). It participates in amino-acid degradation; L-arginine degradation via AST pathway; L-glutamate and succinate from L-arginine: step 4/5. Its function is as follows. Catalyzes the NAD-dependent reduction of succinylglutamate semialdehyde into succinylglutamate. The sequence is that of N-succinylglutamate 5-semialdehyde dehydrogenase from Escherichia coli (strain SE11).